A 273-amino-acid chain; its full sequence is MVLYIIGLGLGDEKDVTIKGFEAIKKSSKIYLEAYTSLLGGSTSIEALEKFYEKKIIIADREMVESGCEEMLKESTENDVSFLVVGDPFGATTHTDLVIRAKELSIPVKVIHNASIMNAIGCCGLQLYSYGQTISMVFFTETTKPDSWYDRVKINRVNGMHTLCLLDIKVKEQSIENMCRGRLIYEPPRFMTVNQCIEQLLEIEEIRKEKVYDQDTLCIGLSRVGQDDQQIISGTMKELLDVDFGAPLHSFIICGDMHFIEKEYFETFRVKKN.

S-adenosyl-L-methionine contacts are provided by residues Leu10, Asp87, Gly90, 115–116 (SI), Leu166, Val224, and His249.

Belongs to the diphthine synthase family.

The catalysed reaction is 2-[(3S)-amino-3-carboxypropyl]-L-histidyl-[translation elongation factor 2] + 4 S-adenosyl-L-methionine = diphthine methyl ester-[translation elongation factor 2] + 4 S-adenosyl-L-homocysteine + 3 H(+). It participates in protein modification; peptidyl-diphthamide biosynthesis. In terms of biological role, S-adenosyl-L-methionine-dependent methyltransferase that catalyzes four methylations of the modified target histidine residue in translation elongation factor 2 (EF-2), to form an intermediate called diphthine methyl ester. The four successive methylation reactions represent the second step of diphthamide biosynthesis. In Dictyostelium discoideum (Social amoeba), this protein is Diphthine methyl ester synthase (dph5).